Consider the following 461-residue polypeptide: Fumarate hydratase class II (461 aa).

Residues 97-99 (SGT), 127-130 (HPND), 137-139 (SSN), and T185 each bind substrate. H186 serves as the catalytic Proton donor/acceptor. S316 is an active-site residue. Residues S317 and 322 to 324 (KVN) each bind substrate.

Belongs to the class-II fumarase/aspartase family. Fumarase subfamily. Homotetramer.

It is found in the cytoplasm. It carries out the reaction (S)-malate = fumarate + H2O. Its pathway is carbohydrate metabolism; tricarboxylic acid cycle; (S)-malate from fumarate: step 1/1. Functionally, involved in the TCA cycle. Catalyzes the stereospecific interconversion of fumarate to L-malate. This is Fumarate hydratase class II from Staphylococcus aureus (strain MRSA252).